The following is a 549-amino-acid chain: Glucose-6-phosphate isomerase (549 aa).

N6-acetyllysine is present on residues lysine 80, lysine 228, and lysine 234. Glutamate 355 (proton donor) is an active-site residue. Active-site residues include histidine 386 and lysine 514.

This sequence belongs to the GPI family.

Its subcellular location is the cytoplasm. It carries out the reaction alpha-D-glucose 6-phosphate = beta-D-fructose 6-phosphate. The protein operates within carbohydrate biosynthesis; gluconeogenesis. It participates in carbohydrate degradation; glycolysis; D-glyceraldehyde 3-phosphate and glycerone phosphate from D-glucose: step 2/4. In terms of biological role, catalyzes the reversible isomerization of glucose-6-phosphate to fructose-6-phosphate. In Escherichia coli O17:K52:H18 (strain UMN026 / ExPEC), this protein is Glucose-6-phosphate isomerase.